Consider the following 379-residue polypeptide: Carbamoyl phosphate synthase small chain (379 aa).

Positions 1–189 are CPSase; sequence MSKLALLVLE…GLPEAKDDSE (189 aa). Positions 47, 241, and 243 each coordinate L-glutamine. The 187-residue stretch at 193–379 folds into the Glutamine amidotransferase type-1 domain; it reads HVVAYDFGAK…FIELIKKHSA (187 aa). Cysteine 269 (nucleophile) is an active-site residue. L-glutamine contacts are provided by leucine 270, glutamine 273, asparagine 311, glycine 313, and phenylalanine 314. Active-site residues include histidine 353 and glutamate 355.

The protein belongs to the CarA family. In terms of assembly, composed of two chains; the small (or glutamine) chain promotes the hydrolysis of glutamine to ammonia, which is used by the large (or ammonia) chain to synthesize carbamoyl phosphate. Tetramer of heterodimers (alpha,beta)4.

It carries out the reaction hydrogencarbonate + L-glutamine + 2 ATP + H2O = carbamoyl phosphate + L-glutamate + 2 ADP + phosphate + 2 H(+). The catalysed reaction is L-glutamine + H2O = L-glutamate + NH4(+). It functions in the pathway amino-acid biosynthesis; L-arginine biosynthesis; carbamoyl phosphate from bicarbonate: step 1/1. Its pathway is pyrimidine metabolism; UMP biosynthesis via de novo pathway; (S)-dihydroorotate from bicarbonate: step 1/3. Small subunit of the glutamine-dependent carbamoyl phosphate synthetase (CPSase). CPSase catalyzes the formation of carbamoyl phosphate from the ammonia moiety of glutamine, carbonate, and phosphate donated by ATP, constituting the first step of 2 biosynthetic pathways, one leading to arginine and/or urea and the other to pyrimidine nucleotides. The small subunit (glutamine amidotransferase) binds and cleaves glutamine to supply the large subunit with the substrate ammonia. This is Carbamoyl phosphate synthase small chain from Vibrio parahaemolyticus serotype O3:K6 (strain RIMD 2210633).